We begin with the raw amino-acid sequence, 768 residues long: DNA replication licensing factor MCM3 homolog 3 (768 aa).

The region spanning 290–497 is the MCM domain; sequence TFDLLGNSLA…IDRQISEHVA (208 aa). Position 340 to 347 (340 to 347) interacts with ATP; the sequence is GDPSVAKS. The short motif at 472–475 is the Arginine finger element; the sequence is SRFD. The span at 661-670 shows a compositional bias: basic and acidic residues; that stretch reads EMKQQADHDA. The tract at residues 661–690 is disordered; sequence EMKQQADHDAGATGGTVDGHGSSGNDPMDV. Positions 672–682 are enriched in gly residues; that stretch reads ATGGTVDGHGS.

The protein belongs to the MCM family.

The protein localises to the nucleus. The enzyme catalyses ATP + H2O = ADP + phosphate + H(+). Functionally, acts as a factor that allows the DNA to undergo a single round of replication per cell cycle. Required for DNA replication and cell proliferation. May act as a component of the MCM complex which is the putative replicative helicase of the replication licensing system in eukaryotic cells. This Zea mays (Maize) protein is DNA replication licensing factor MCM3 homolog 3 (ROA3).